The primary structure comprises 96 residues: Invertase 7 (96 aa).

The signal sequence occupies residues 1 to 19 (MLLQAFIFLLAGFAAKISA). A glycan (N-linked (GlcNAc...) asparagine) is linked at asparagine 23. Substrate-binding positions include 39 to 42 (WMND) and glutamine 60. Aspartate 42 is a catalytic residue. N-linked (GlcNAc...) asparagine glycosylation is found at asparagine 64 and asparagine 76.

It belongs to the glycosyl hydrolase 32 family.

The enzyme catalyses Hydrolysis of terminal non-reducing beta-D-fructofuranoside residues in beta-D-fructofuranosides.. The chain is Invertase 7 (SUC7) from Saccharomyces cerevisiae (Baker's yeast).